The following is a 151-amino-acid chain: Multiprotein-bridging factor 1 (151 aa).

Residues 1 to 32 are disordered; it reads MSSDWDSVTIIGQKARVGGGGPRENVAKTSSQ. The HTH cro/C1-type domain maps to 86 to 140; sequence IQQARQEKKLTQKELATKVNEKPNVINDYEAGRAIPNQQLLAKLERALGVKLRGK. Positions 97–116 form a DNA-binding region, H-T-H motif; it reads QKELATKVNEKPNVINDYEA.

The protein belongs to the MBF1 family.

In terms of biological role, transcriptional coactivator that stimulates GCN4-dependent transcriptional activity by bridging the DNA-binding region of GCN4 and TBP (SPT15), thereby recruiting TBP to GCN4-bound promoters. Involved in induction of the ribosome quality control (RQC) pathway; a pathway that degrades nascent peptide chains during problematic translation. Required to prevent stalled ribosomes from frameshifting. The protein is Multiprotein-bridging factor 1 (MBF1) of Candida albicans (strain SC5314 / ATCC MYA-2876) (Yeast).